The primary structure comprises 409 residues: Pyrophosphate--fructose 6-phosphate 1-phosphotransferase (409 aa).

Residue Gly-14 coordinates diphosphate. Mg(2+) is bound at residue Asp-123. Substrate contacts are provided by residues 151–153 (TID), 196–198 (MGR), Glu-268, and 325–328 (YFAR). Catalysis depends on Asp-153, which acts as the Proton acceptor.

This sequence belongs to the phosphofructokinase type A (PFKA) family. PPi-dependent PFK group II subfamily. Clade 'P' sub-subfamily. Homotetramer. Mg(2+) is required as a cofactor.

It is found in the cytoplasm. The catalysed reaction is beta-D-fructose 6-phosphate + diphosphate = beta-D-fructose 1,6-bisphosphate + phosphate + H(+). The protein operates within carbohydrate degradation; glycolysis; D-glyceraldehyde 3-phosphate and glycerone phosphate from D-glucose: step 3/4. With respect to regulation, non-allosteric. Its function is as follows. Catalyzes the phosphorylation of D-fructose 6-phosphate, the first committing step of glycolysis. Uses inorganic phosphate (PPi) as phosphoryl donor instead of ATP like common ATP-dependent phosphofructokinases (ATP-PFKs), which renders the reaction reversible, and can thus function both in glycolysis and gluconeogenesis. Consistently, PPi-PFK can replace the enzymes of both the forward (ATP-PFK) and reverse (fructose-bisphosphatase (FBPase)) reactions. This chain is Pyrophosphate--fructose 6-phosphate 1-phosphotransferase, found in Methylotuvimicrobium alcaliphilum (strain DSM 19304 / NCIMB 14124 / VKM B-2133 / 20Z) (Methylomicrobium alcaliphilum).